The sequence spans 515 residues: Serine--tRNA ligase, cytoplasmic (515 aa).

An interaction with tRNA region spans residues 9–61; that stretch reads RTDKGGDPEIIRETQRKRFKDVSLVDKLVQADTEWRKCRFTADNLNKAKNLCS. Threonine 271 and arginine 302 together coordinate L-serine. ATP-binding positions include 302–304 and 318–321; these read RQE and VHQF. Glutamate 325 is a binding site for L-serine. Position 391–394 (391–394) interacts with ATP; sequence ELVS. Asparagine 427 contributes to the L-serine binding site. The interval 475 to 515 is disordered; the sequence is PIDQETTKKQKKQQEGGKKKKHQGGDADLENKVENMSVNDS. Basic and acidic residues predominate over residues 479–507; it reads ETTKKQKKQQEGGKKKKHQGGDADLENKV. The short motif at 482-494 is the Nuclear localization signal element; that stretch reads KKQKKQQEGGKKK.

It belongs to the class-II aminoacyl-tRNA synthetase family. Type-1 seryl-tRNA synthetase subfamily.

Its subcellular location is the cytoplasm. It is found in the nucleus. It catalyses the reaction tRNA(Ser) + L-serine + ATP = L-seryl-tRNA(Ser) + AMP + diphosphate + H(+). It carries out the reaction tRNA(Sec) + L-serine + ATP = L-seryl-tRNA(Sec) + AMP + diphosphate + H(+). In terms of biological role, catalyzes the attachment of serine to tRNA(Ser) in a two-step reaction: serine is first activated by ATP to form Ser-AMP and then transferred to the acceptor end of tRNA(Ser). Is probably also able to aminoacylate tRNA(Sec) with serine, to form the misacylated tRNA L-seryl-tRNA(Sec), which will be further converted into selenocysteinyl-tRNA(Sec). In the nucleus, binds to the vegfa core promoter and prevents myc binding and transcriptional activation by myc. Thereby inhibits the production of vegfa and sprouting angiogenesis mediated by vegfa. The chain is Serine--tRNA ligase, cytoplasmic (sars1) from Danio rerio (Zebrafish).